We begin with the raw amino-acid sequence, 542 residues long: Zinc finger CCHC domain-containing protein 7 (542 aa).

The disordered stretch occupies residues 110–144 (QAQEKTQSPATPRSNKVANKCKRSNKKPEPEESPS). The segment covering 112 to 126 (QEKTQSPATPRSNKV) has biased composition (polar residues). Residues Lys-129 and Lys-136 each participate in a glycyl lysine isopeptide (Lys-Gly) (interchain with G-Cter in SUMO2) cross-link. Ser-142 carries the phosphoserine modification. Glycyl lysine isopeptide (Lys-Gly) (interchain with G-Cter in SUMO2) cross-links involve residues Lys-236 and Lys-251. CCHC-type zinc fingers lie at residues 238-255 (VTCRNCDKRGHLSKNCPL), 260-277 (RPCCLCSERGHLQYGCPA), and 301-318 (KRCDRCDMIGHYADACPE). A Glycyl lysine isopeptide (Lys-Gly) (interchain with G-Cter in SUMO2) cross-link involves residue Lys-336. The segment at 345–362 (VYCYNCAQKGHYGHECTE) adopts a CCHC-type 4 zinc-finger fold. Residues 396 to 542 (LKDIKKNGDF…RKKKPKSSGF (147 aa)) form a disordered region. Residue Lys-410 forms a Glycyl lysine isopeptide (Lys-Gly) (interchain with G-Cter in SUMO2) linkage. The span at 412 to 421 (PHGEETDRYH) shows a compositional bias: basic and acidic residues. The span at 422 to 435 (HDRRKSRFSGKRSR) shows a compositional bias: basic residues. Lys-432 is covalently cross-linked (Glycyl lysine isopeptide (Lys-Gly) (interchain with G-Cter in SUMO2)). Residues 436–456 (WPRESKETQKEKTRGREGEKH) are compositionally biased toward basic and acidic residues. Lys-474 is covalently cross-linked (Glycyl lysine isopeptide (Lys-Gly) (interchain with G-Cter in SUMO2)). Low complexity predominate over residues 474 to 489 (KPNSSSSSNSQKPSKS). A phosphoserine mark is found at Ser-478 and Ser-480. Glycyl lysine isopeptide (Lys-Gly) (interchain with G-Cter in SUMO2) cross-links involve residues Lys-485 and Lys-488. Composition is skewed to basic and acidic residues over residues 499-510 (LREEKLRRESMR) and 518-528 (FVEDGSHDDLF). A Glycyl lysine isopeptide (Lys-Gly) (interchain with G-Cter in SUMO2) cross-link involves residue Lys-531. A compositionally biased stretch (basic residues) spans 531–542 (KQRKKKPKSSGF).

In terms of assembly, component of a nucleolar TRAMP-like complex, an ATP-dependent exosome regulatory complex consisting of a helicase (MTREX), an oligadenylate polymerase (TENT4B or TENT4A), and a substrate specific RNA-binding factor (ZCCHC7 or ZCCHC8). Several TRAMP-like complexes exist with specific compositions and are associated with nuclear, or nucleolar RNA exosomes.

The protein localises to the nucleus. Its subcellular location is the nucleolus. This is Zinc finger CCHC domain-containing protein 7 (Zcchc7) from Rattus norvegicus (Rat).